A 118-amino-acid chain; its full sequence is Large ribosomal subunit protein uL18 (118 aa).

The protein belongs to the universal ribosomal protein uL18 family. As to quaternary structure, part of the 50S ribosomal subunit; part of the 5S rRNA/L5/L18/L25 subcomplex. Contacts the 5S and 23S rRNAs.

Functionally, this is one of the proteins that bind and probably mediate the attachment of the 5S RNA into the large ribosomal subunit, where it forms part of the central protuberance. The chain is Large ribosomal subunit protein uL18 from Cupriavidus pinatubonensis (strain JMP 134 / LMG 1197) (Cupriavidus necator (strain JMP 134)).